The chain runs to 185 residues: Protein GrpE (185 aa).

Residues 1-44 (MSEEELTNGPGPEPQPEPLEVESAPLEAAPAGEPDKALLEAQQQ) form a disordered region.

Belongs to the GrpE family. As to quaternary structure, homodimer.

It is found in the cytoplasm. In terms of biological role, participates actively in the response to hyperosmotic and heat shock by preventing the aggregation of stress-denatured proteins, in association with DnaK and GrpE. It is the nucleotide exchange factor for DnaK and may function as a thermosensor. Unfolded proteins bind initially to DnaJ; upon interaction with the DnaJ-bound protein, DnaK hydrolyzes its bound ATP, resulting in the formation of a stable complex. GrpE releases ADP from DnaK; ATP binding to DnaK triggers the release of the substrate protein, thus completing the reaction cycle. Several rounds of ATP-dependent interactions between DnaJ, DnaK and GrpE are required for fully efficient folding. This Methylococcus capsulatus (strain ATCC 33009 / NCIMB 11132 / Bath) protein is Protein GrpE.